Here is a 157-residue protein sequence, read N- to C-terminus: SsrA-binding protein (157 aa).

The protein belongs to the SmpB family.

It is found in the cytoplasm. Functionally, required for rescue of stalled ribosomes mediated by trans-translation. Binds to transfer-messenger RNA (tmRNA), required for stable association of tmRNA with ribosomes. tmRNA and SmpB together mimic tRNA shape, replacing the anticodon stem-loop with SmpB. tmRNA is encoded by the ssrA gene; the 2 termini fold to resemble tRNA(Ala) and it encodes a 'tag peptide', a short internal open reading frame. During trans-translation Ala-aminoacylated tmRNA acts like a tRNA, entering the A-site of stalled ribosomes, displacing the stalled mRNA. The ribosome then switches to translate the ORF on the tmRNA; the nascent peptide is terminated with the 'tag peptide' encoded by the tmRNA and targeted for degradation. The ribosome is freed to recommence translation, which seems to be the essential function of trans-translation. The chain is SsrA-binding protein from Chlorobium luteolum (strain DSM 273 / BCRC 81028 / 2530) (Pelodictyon luteolum).